The chain runs to 263 residues: Imidazole glycerol phosphate synthase subunit HisF (263 aa).

Catalysis depends on residues D11 and D130.

The protein belongs to the HisA/HisF family. In terms of assembly, heterodimer of HisH and HisF.

It is found in the cytoplasm. It catalyses the reaction 5-[(5-phospho-1-deoxy-D-ribulos-1-ylimino)methylamino]-1-(5-phospho-beta-D-ribosyl)imidazole-4-carboxamide + L-glutamine = D-erythro-1-(imidazol-4-yl)glycerol 3-phosphate + 5-amino-1-(5-phospho-beta-D-ribosyl)imidazole-4-carboxamide + L-glutamate + H(+). It participates in amino-acid biosynthesis; L-histidine biosynthesis; L-histidine from 5-phospho-alpha-D-ribose 1-diphosphate: step 5/9. Its function is as follows. IGPS catalyzes the conversion of PRFAR and glutamine to IGP, AICAR and glutamate. The HisF subunit catalyzes the cyclization activity that produces IGP and AICAR from PRFAR using the ammonia provided by the HisH subunit. This chain is Imidazole glycerol phosphate synthase subunit HisF, found in Synechococcus sp. (strain CC9311).